The following is a 782-amino-acid chain: E3 ubiquitin-protein ligase SopA (782 aa).

The tract at residues 137 to 171 is disordered; it reads VSVSANNRPTVSEGRTPPVSPSLSLQATSSPSSPA. Positions 157–171 are enriched in low complexity; sequence PSLSLQATSSPSSPA. The active-site Glycyl thioester intermediate is the cysteine 753.

The protein belongs to the SopA E3 ligase family. Post-translationally, ubiquitinated in the presence of host E1 ubiquitin-activating enzyme, E2 ubiquitin-conjugating enzyme and ubiquitin.

The protein localises to the secreted. It is found in the host cell. It carries out the reaction S-ubiquitinyl-[E2 ubiquitin-conjugating enzyme]-L-cysteine + [acceptor protein]-L-lysine = [E2 ubiquitin-conjugating enzyme]-L-cysteine + N(6)-ubiquitinyl-[acceptor protein]-L-lysine.. Functionally, effector proteins function to alter host cell physiology and promote bacterial survival in host tissues. This protein is an E3 ubiquitin ligase that interferes with host's ubiquitination pathway. This chain is E3 ubiquitin-protein ligase SopA (sopA), found in Salmonella enteritidis PT4 (strain P125109).